A 216-amino-acid polypeptide reads, in one-letter code: Thymidine kinase (216 aa).

Residues 9-16 (GTMDCGKS) and 86-89 (DEAQ) contribute to the ATP site. Residue E87 is the Proton acceptor of the active site.

Belongs to the thymidine kinase family. In terms of assembly, homotetramer.

The protein resides in the cytoplasm. The enzyme catalyses thymidine + ATP = dTMP + ADP + H(+). The polypeptide is Thymidine kinase (Streptomyces avermitilis (strain ATCC 31267 / DSM 46492 / JCM 5070 / NBRC 14893 / NCIMB 12804 / NRRL 8165 / MA-4680)).